Reading from the N-terminus, the 226-residue chain is CRISPR-associated protein Cas5 (226 aa).

This sequence belongs to the CRISPR-associated protein Cas5 family. Subtype I-A/Apern subfamily. Can form a Cascade complex with Csa5, Cas7, Cas3, Cas3' and Cas8a2.

CRISPR (clustered regularly interspaced short palindromic repeat) is an adaptive immune system that provides protection against mobile genetic elements (viruses, transposable elements and conjugative plasmids). CRISPR clusters contain spacers, sequences complementary to antecedent mobile elements, and target invading nucleic acids. CRISPR clusters are transcribed and processed into CRISPR RNA (crRNA). This Thermoproteus tenax (strain ATCC 35583 / DSM 2078 / JCM 9277 / NBRC 100435 / Kra 1) protein is CRISPR-associated protein Cas5 (cas5a).